Here is a 222-residue protein sequence, read N- to C-terminus: Superoxide dismutase [Mn], mitochondrial (222 aa).

Residues 1–24 (MLCRAACSTSRKLVPALGSLGSRQ) constitute a mitochondrion transit peptide. A Mn(2+)-binding site is contributed by His-50. Position 58 is a 3'-nitrotyrosine (Tyr-58). Residues Lys-68 and Lys-75 each carry the N6-acetyllysine; alternate modification. Lys-68 and Lys-75 each carry N6-succinyllysine; alternate. His-98 contacts Mn(2+). Lys-114 carries the post-translational modification N6-acetyllysine. An N6-acetyllysine; alternate mark is found at Lys-122 and Lys-130. N6-succinyllysine; alternate is present on residues Lys-122 and Lys-130. 2 residues coordinate Mn(2+): Asp-183 and His-187. Lys-202 is modified (N6-acetyllysine).

This sequence belongs to the iron/manganese superoxide dismutase family. Homotetramer. Mn(2+) is required as a cofactor. Post-translationally, nitrated under oxidative stress. Nitration coupled with oxidation inhibits the catalytic activity. Acetylation at Lys-122 decreases enzymatic activity. Deacetylated by SIRT3 upon exposure to ionizing radiations or after long fasting. In terms of processing, polyubiquitinated; leading to proteasomal degradation. Deubiquitinated by USP36 which increases protein stability.

The protein localises to the mitochondrion matrix. It catalyses the reaction 2 superoxide + 2 H(+) = H2O2 + O2. Functionally, destroys superoxide anion radicals which are normally produced within the cells and which are toxic to biological systems. The sequence is that of Superoxide dismutase [Mn], mitochondrial (SOD2) from Equus caballus (Horse).